The primary structure comprises 520 residues: GMP synthase [glutamine-hydrolyzing] (520 aa).

Positions 9–202 (KILILDFGSQ…VRKICGCSGK (194 aa)) constitute a Glutamine amidotransferase type-1 domain. C86 serves as the catalytic Nucleophile. Catalysis depends on residues H176 and E178. The GMPS ATP-PPase domain maps to 203–395 (WTPGQIIEDA…LGLPHQMVWR (193 aa)). 230–236 (SGGVDSS) is an ATP binding site.

In terms of assembly, homodimer.

The catalysed reaction is XMP + L-glutamine + ATP + H2O = GMP + L-glutamate + AMP + diphosphate + 2 H(+). The protein operates within purine metabolism; GMP biosynthesis; GMP from XMP (L-Gln route): step 1/1. Functionally, catalyzes the synthesis of GMP from XMP. The protein is GMP synthase [glutamine-hydrolyzing] of Geotalea daltonii (strain DSM 22248 / JCM 15807 / FRC-32) (Geobacter daltonii).